The primary structure comprises 379 residues: Alcohol dehydrogenase class-3 (379 aa).

Positions 47, 69, 99, 102, 105, 113, and 176 each coordinate Zn(2+).

It belongs to the zinc-containing alcohol dehydrogenase family. Class-III subfamily. As to quaternary structure, homodimer. Zn(2+) serves as cofactor.

The protein localises to the cytoplasm. It carries out the reaction a primary alcohol + NAD(+) = an aldehyde + NADH + H(+). The enzyme catalyses a secondary alcohol + NAD(+) = a ketone + NADH + H(+). It catalyses the reaction S-(hydroxymethyl)glutathione + NADP(+) = S-formylglutathione + NADPH + H(+). The catalysed reaction is S-(hydroxymethyl)glutathione + NAD(+) = S-formylglutathione + NADH + H(+). Functionally, class-III ADH is remarkably ineffective in oxidizing ethanol, but it readily catalyzes the oxidation of long-chain primary alcohols and the oxidation of S-(hydroxymethyl) glutathione. This is Alcohol dehydrogenase class-3 (adh5) from Dictyostelium discoideum (Social amoeba).